The primary structure comprises 578 residues: Solute carrier family 15 member 3 (578 aa).

Basic and acidic residues predominate over residues 1–15; the sequence is MSAPRAEEQPSRSGE. Positions 1–27 are disordered; it reads MSAPRAEEQPSRSGERQPLVARGPRGP. Transmembrane regions (helical) follow at residues 33–53, 77–97, 102–122, 155–175, and 201–221; these read TAAA…FGVT, LLFL…ADVY, LTIS…LTTI, PYCA…ASSV, and WFYW…AFIE. Residue Asn223 is glycosylated (N-linked (GlcNAc...) asparagine). Residues 232–252 traverse the membrane as a helical segment; sequence IIVGLVGLAFFIFLFATPVFI. Residues 280–301 form a disordered region; sequence SRDSESAHLLPDQRSNQPGPSP. Residues 308–328 traverse the membrane as a helical segment; the sequence is FQVLVKILPVMVTLVPYWMVY. Asn353 is a glycosylation site (N-linked (GlcNAc...) asparagine). 2 helical membrane passes run 367–387 and 405–425; these read IPEA…IPVK and LQKM…AGVL. A glycan (N-linked (GlcNAc...) asparagine) is linked at Asn436. Helical transmembrane passes span 462–481, 494–514, and 538–558; these read YLLI…EFAY, GIFF…VALL, and YFFL…WIAG.

This sequence belongs to the major facilitator superfamily. Proton-dependent oligopeptide transporter (POT/PTR) (TC 2.A.17) family. Expressed highly in bone marrow derived macrophages, and weakly in spleen and lung. Expressed in plasmacytoid dendritic cells (pDCs) in response to toll-like receptors (TLR) stimulation.

It is found in the lysosome membrane. The protein localises to the endosome membrane. It carries out the reaction N-acetyl-D-muramoyl-L-alanyl-D-isoglutamine(out) + n H(+)(out) = N-acetyl-D-muramoyl-L-alanyl-D-isoglutamine(in) + n H(+)(in). It catalyses the reaction glycylglycylglycine(out) + n H(+)(out) = glycylglycylglycine(in) + n H(+)(in). The catalysed reaction is carnosine(out) + n H(+)(out) = carnosine(in) + n H(+)(in). The enzyme catalyses L-histidine(out) + n H(+)(out) = L-histidine(in) + n H(+)(in). Functionally, proton-coupled amino-acid transporter that transports free histidine and certain di- and tripeptides, and is involved in innate immune response. Also able to transport carnosine. Involved in the detection of microbial pathogens by toll-like receptors (TLRs) and NOD-like receptors (NLRs), probably by mediating transport of bacterial peptidoglycans across the endolysosomal membrane: catalyzes the transport of certain bacterial peptidoglycans, such as muramyl dipeptide (MDP), the NOD2 ligand. This Mus musculus (Mouse) protein is Solute carrier family 15 member 3.